Here is a 384-residue protein sequence, read N- to C-terminus: Carbamoyl phosphate synthase small chain (384 aa).

The interval 1–189 (MSKSALLVLE…GLPEAKDDSE (189 aa)) is CPSase. Residues S47, G241, and G243 each contribute to the L-glutamine site. One can recognise a Glutamine amidotransferase type-1 domain in the interval 193–380 (HVVAYDFGAK…IELIKLSVNE (188 aa)). The Nucleophile role is filled by C269. Residues L270, Q273, N311, G313, and F314 each coordinate L-glutamine. Residues H353 and E355 contribute to the active site.

It belongs to the CarA family. Composed of two chains; the small (or glutamine) chain promotes the hydrolysis of glutamine to ammonia, which is used by the large (or ammonia) chain to synthesize carbamoyl phosphate. Tetramer of heterodimers (alpha,beta)4.

It carries out the reaction hydrogencarbonate + L-glutamine + 2 ATP + H2O = carbamoyl phosphate + L-glutamate + 2 ADP + phosphate + 2 H(+). The enzyme catalyses L-glutamine + H2O = L-glutamate + NH4(+). It functions in the pathway amino-acid biosynthesis; L-arginine biosynthesis; carbamoyl phosphate from bicarbonate: step 1/1. It participates in pyrimidine metabolism; UMP biosynthesis via de novo pathway; (S)-dihydroorotate from bicarbonate: step 1/3. Functionally, small subunit of the glutamine-dependent carbamoyl phosphate synthetase (CPSase). CPSase catalyzes the formation of carbamoyl phosphate from the ammonia moiety of glutamine, carbonate, and phosphate donated by ATP, constituting the first step of 2 biosynthetic pathways, one leading to arginine and/or urea and the other to pyrimidine nucleotides. The small subunit (glutamine amidotransferase) binds and cleaves glutamine to supply the large subunit with the substrate ammonia. The polypeptide is Carbamoyl phosphate synthase small chain (Photobacterium profundum (strain SS9)).